We begin with the raw amino-acid sequence, 1628 residues long: Centrosomal protein of 170 kDa protein B (1628 aa).

The FHA domain maps to 23 to 73; it reads IFVGREDCELMLQSRSVDKQHAVINYDSDKDEHRVKDLGSLNGTFVNDVRI. Disordered regions lie at residues 136–201, 329–369, 415–504, 566–586, 637–659, 719–739, 758–842, 1005–1084, 1100–1341, 1379–1405, 1443–1463, and 1560–1628; these read EHGA…DMTQ, LIRR…SEDP, PRKK…GKNY, SDVR…DAGT, LASE…KLSN, EHQG…LPQL, ESQR…KKST, VSLV…LDFT, TVSS…EDEQ, AGDG…TPAS, GSTG…DPSK, and HLDV…TYIV. Basic and acidic residues-rich tracts occupy residues 147–156 and 180–201; these read KQDKADKKAT and KLDK…DMTQ. Over residues 421–434 the composition is skewed to polar residues; the sequence is QSFTHNANSPQNDT. A compositionally biased stretch (basic and acidic residues) spans 436 to 453; that stretch reads PVLKAKAEKRKGTLHVEK. The segment covering 454–479 has biased composition (polar residues); the sequence is VSTNGMGSTAPASKSLSSPSFPQRSN. Residues 481–490 are compositionally biased toward basic and acidic residues; sequence FRREKTEDRI. Composition is skewed to basic and acidic residues over residues 758–773 and 817–828; these read ESQR…RISE and WKGEESHSREPS. The segment covering 1005 to 1023 has biased composition (polar residues); the sequence is VSLVSDKNVPSHSQKNRIV. The span at 1045–1056 shows a compositional bias: basic and acidic residues; sequence ARERLSEKRRTV. Positions 1129–1150 are enriched in polar residues; that stretch reads RSSNAQKVQQALTRSNSLSTPR. Positions 1176-1193 are enriched in low complexity; that stretch reads SNISPGTSSANSSSAKSS. Polar residues predominate over residues 1216-1227; the sequence is NVPSDSETTSSV. 3 stretches are compositionally biased toward low complexity: residues 1261–1280, 1312–1328, and 1381–1398; these read TQKQ…SSST, ASTA…SRRQ, and DGDS…SISS. Polar residues predominate over residues 1564 to 1596; the sequence is PSSNKKTSSTILTSNPLSRTTNNSAARTESQTP. Positions 1606–1618 are enriched in low complexity; the sequence is SSSSSSRSPGSSF.

Belongs to the CEP170 family.

It is found in the cytoplasm. It localises to the cytoskeleton. Functionally, plays a role in microtubule organization. The protein is Centrosomal protein of 170 kDa protein B (cep170b) of Xenopus tropicalis (Western clawed frog).